The following is a 160-amino-acid chain: MGVTKKPDLTDPILRAKLAKGMGHNYYGEPAWPNDLLYIFPVVILGTIACTIGLAVLDPSMIGEPANPFATPLEILPEWYFFPVFQILRTVPNKLLGVLLMASVPVGLLTVPFLENVNKFQNPFRRPVATTVFLIGTAVAIWLGIGAALPIDKSLTLGLF.

3 consecutive transmembrane segments (helical) span residues 36-56 (LLYI…GLAV), 95-115 (LLGV…PFLE), and 131-151 (TVFL…ALPI).

It belongs to the cytochrome b family. PetD subfamily. As to quaternary structure, the 4 large subunits of the cytochrome b6-f complex are cytochrome b6, subunit IV (17 kDa polypeptide, petD), cytochrome f and the Rieske protein, while the 4 small subunits are petG, petL, petM and petN. The complex functions as a dimer.

The protein localises to the plastid. The protein resides in the chloroplast thylakoid membrane. In terms of biological role, component of the cytochrome b6-f complex, which mediates electron transfer between photosystem II (PSII) and photosystem I (PSI), cyclic electron flow around PSI, and state transitions. The sequence is that of Cytochrome b6-f complex subunit 4 from Chara vulgaris (Common stonewort).